We begin with the raw amino-acid sequence, 101 residues long: Small ribosomal subunit protein uS14 (101 aa).

A disordered region spans residues 48-69 (LSKLPRDSSPSRHRSRCELSGR). Over residues 51–68 (LPRDSSPSRHRSRCELSG) the composition is skewed to basic and acidic residues.

This sequence belongs to the universal ribosomal protein uS14 family. Part of the 30S ribosomal subunit. Contacts proteins S3 and S10.

In terms of biological role, binds 16S rRNA, required for the assembly of 30S particles and may also be responsible for determining the conformation of the 16S rRNA at the A site. The polypeptide is Small ribosomal subunit protein uS14 (Stenotrophomonas maltophilia (strain R551-3)).